The following is a 219-amino-acid chain: Vacuolar protein sorting-associated protein 32 homolog 2 (219 aa).

2 coiled-coil regions span residues 10–41 (KQEA…KKAG) and 117–176 (TNID…QLLQ). The segment at 168–219 (EELESQLLQPATTAPPLPSVPVPAGRQPARPVPQKRTAEEEELAALQAEMAL) is disordered.

It belongs to the SNF7 family. Component of the endosomal sorting required for transport complex III (ESCRT-III), composed at least of VPS2, VPS20, VPS24 and VPS32. Interacts with SKD1. Interacts with BRO1/ALIX.

The protein resides in the endosome. In terms of biological role, component of the ESCRT-III complex, which is required for multivesicular bodies (MVBs) formation and sorting of endosomal cargo proteins into MVBs. The ESCRT-III complex is probably involved in the concentration of MVB cargo. The sequence is that of Vacuolar protein sorting-associated protein 32 homolog 2 (VPS32.2) from Arabidopsis thaliana (Mouse-ear cress).